The following is a 327-amino-acid chain: Transaldolase (327 aa).

Lys132 serves as the catalytic Schiff-base intermediate with substrate.

The protein belongs to the transaldolase family. Type 1 subfamily.

Its subcellular location is the cytoplasm. It catalyses the reaction D-sedoheptulose 7-phosphate + D-glyceraldehyde 3-phosphate = D-erythrose 4-phosphate + beta-D-fructose 6-phosphate. The protein operates within carbohydrate degradation; pentose phosphate pathway; D-glyceraldehyde 3-phosphate and beta-D-fructose 6-phosphate from D-ribose 5-phosphate and D-xylulose 5-phosphate (non-oxidative stage): step 2/3. In terms of biological role, transaldolase is important for the balance of metabolites in the pentose-phosphate pathway. This chain is Transaldolase, found in Chlamydia muridarum (strain MoPn / Nigg).